A 193-amino-acid polypeptide reads, in one-letter code: Cysteine and glycine-rich protein 2 (193 aa).

Residues 10–61 (CGACGRTVYHAEEVQCDGRTFHRCCFLCMVCRKNLDSTTVAIHDEEIYCKSC) enclose the LIM zinc-binding 1 domain. The Nuclear localization signal signature appears at 64 to 69 (KKYGPK). Lys-91 is covalently cross-linked (Glycyl lysine isopeptide (Lys-Gly) (interchain with G-Cter in SUMO2)). Lys-112 and Lys-131 each carry N6-acetyllysine. The LIM zinc-binding 2 domain occupies 119–170 (CSRCGDSVYAAEKIIGAGKPWHKNCFRCAKCGKSLESTTLTEKEGEIYCKGC). Lys-137 is subject to N6-acetyllysine; alternate. Lys-137 carries the N6-succinyllysine; alternate modification. Position 161 is an N6-acetyllysine (Lys-161).

In terms of assembly, interacts with KAT14. The LIM domain 1 is necessary and sufficient for this interaction. Interacts with GLRX3. In terms of tissue distribution, highly expressed in the aorta; weakly found in the kidney, thymus, and intestine. Barely detectable in brain, testis, esophagus, lung, liver, aortic adventitia, vena cava, or uterus; not present in heart and skeletal muscle.

The protein resides in the nucleus. Its function is as follows. Drastically down-regulated in response to PDGF-BB or cell injury, that promote smooth muscle cell proliferation and dedifferentiation. Seems to play a role in the development of the embryonic vascular system. This Rattus norvegicus (Rat) protein is Cysteine and glycine-rich protein 2 (Csrp2).